We begin with the raw amino-acid sequence, 211 residues long: Mediator-associated protein 2 (211 aa).

The disordered stretch occupies residues 128–211; it reads QQKLVGSVTN…KSKKKVKKEE (84 aa). A compositionally biased stretch (low complexity) spans 134-148; the sequence is SVTNSSKKSSNLTQS. A Phosphoserine modification is found at Ser173. Residues 189–198 are compositionally biased toward low complexity; the sequence is STSTVSGSSE. The span at 202–211 shows a compositional bias: basic residues; that stretch reads KSKKKVKKEE.

As to quaternary structure, associated with the Mediator complex.

It is found in the nucleus. The protein is Mediator-associated protein 2 of Arabidopsis thaliana (Mouse-ear cress).